The sequence spans 361 residues: POU domain, class 3, transcription factor 4 (361 aa).

2 disordered regions span residues 99-131 (PHVAHHSPHTNHPNAWGASPAPNPSITSSGQPL) and 144-192 (MLEH…PTSD). Polar residues predominate over residues 122-131 (PSITSSGQPL). Basic and acidic residues predominate over residues 165 to 183 (VLREPPDHGELGSHHCQDH). The POU-specific domain maps to 186–260 (EETPTSDELE…LLNKWLEEAD (75 aa)). Position 265 is a phosphoserine (Ser265). Positions 278–337 (KRKKRTSIEVSVKGVLETHFLKCPKPAAQEISSLADSLQLEKEVVRVWFCNRRQKEKRMT) form a DNA-binding region, homeobox.

Belongs to the POU transcription factor family. Class-3 subfamily. Interacts with HNRNPU. In terms of tissue distribution, brain specific.

It is found in the nucleus. In terms of biological role, probable transcription factor which exert its primary action widely during early neural development and in a very limited set of neurons in the mature brain. This chain is POU domain, class 3, transcription factor 4 (POU3F4), found in Homo sapiens (Human).